The following is a 350-amino-acid chain: MSYEKHSDAKASRYAWNQPWNPFEVTLSDPTYPMNLEEKNQIPYRFQSVPDDVPEVPHIESRYKNLPGNNIYLCCGRLQMSSQYKAFLISLFALILPGVLFFIFSAFWLWHHVSPAVPITFAYLYALAVVSMFKCSTADPGILPRNAYSLTYNPAHPWSVIPEDRKVLVGSTRSDSVFVNTVYCHTCHLYRPPRASHCHLCDNCVEYLDHHCIWLNTCIGRRNYRYYFIFLLSVVLSALYLTGLGFYTSIGSFHESTDTNFAAHLRRPWAGVSFFLGIYGALGAILPGILFCYQCYLISVGQNVHEYLRAKSTETEDVHPFHDSIWLNFLVVLCRPKNVSYVRPTRKSYV.

The Cytoplasmic segment spans residues 1 to 86 (MSYEKHSDAK…RLQMSSQYKA (86 aa)). A helical membrane pass occupies residues 87–107 (FLISLFALILPGVLFFIFSAF). At 108–112 (WLWHH) the chain is on the lumenal side. The chain crosses the membrane as a helical span at residues 113–133 (VSPAVPITFAYLYALAVVSMF). Over 134–225 (KCSTADPGIL…NTCIGRRNYR (92 aa)) the chain is Cytoplasmic. A DHHC domain is found at 182-232 (VYCHTCHLYRPPRASHCHLCDNCVEYLDHHCIWLNTCIGRRNYRYYFIFLL). C212 serves as the catalytic S-palmitoyl cysteine intermediate. The chain crosses the membrane as a helical span at residues 226–246 (YYFIFLLSVVLSALYLTGLGF). At 247 to 270 (YTSIGSFHESTDTNFAAHLRRPWA) the chain is on the lumenal side. The chain crosses the membrane as a helical span at residues 271 to 291 (GVSFFLGIYGALGAILPGILF). The Cytoplasmic segment spans residues 292–350 (CYQCYLISVGQNVHEYLRAKSTETEDVHPFHDSIWLNFLVVLCRPKNVSYVRPTRKSYV).

The protein belongs to the DHHC palmitoyltransferase family. ERF2/ZDHHC9 subfamily. Interacts with erf4. Autopalmitoylated.

It is found in the endoplasmic reticulum membrane. Its subcellular location is the golgi apparatus. The protein resides in the golgi stack membrane. It catalyses the reaction L-cysteinyl-[protein] + hexadecanoyl-CoA = S-hexadecanoyl-L-cysteinyl-[protein] + CoA. In terms of biological role, the erf2-erf4 complex is a palmitoyltransferase with a major role in driving sexual development. Palmitoylates ras1. Palmitoylates isp3. Palmitoylates rho3. The sequence is that of Palmitoyltransferase erf2 from Schizosaccharomyces pombe (strain 972 / ATCC 24843) (Fission yeast).